The sequence spans 281 residues: Succinate dehydrogenase [ubiquinone] iron-sulfur subunit 1, mitochondrial (281 aa).

Residues 1–25 constitute a mitochondrion transit peptide; that stretch reads MAAAALLRRSPAARALLSPALSSRL. The segment at 26-48 is disordered; it reads VASKPHSSSPAPPPPPSKAGANT. The region spanning 49–141 is the 2Fe-2S ferredoxin-type domain; that stretch reads KTFSIYRWDP…ASTISPLPHM (93 aa). [2Fe-2S] cluster is bound by residues C102, C107, and C122. The 4Fe-4S ferredoxin-type domain maps to 184 to 214; it reads DRAKLDGMYECILCACCSTSCPSYWWNPEEY. [4Fe-4S] cluster is bound by residues C194, C197, and C200. C204 provides a ligand contact to [3Fe-4S] cluster. Residue W209 participates in a ubiquinone binding. Positions 251 and 257 each coordinate [3Fe-4S] cluster. Residue C261 coordinates [4Fe-4S] cluster.

This sequence belongs to the succinate dehydrogenase/fumarate reductase iron-sulfur protein family. As to quaternary structure, component of complex II composed of eight subunits in plants: four classical SDH subunits SDH1, SDH2, SDH3 and SDH4 (a flavoprotein (FP), an iron-sulfur protein (IP), and a cytochrome b composed of a large and a small subunit.), as well as four subunits unknown in mitochondria from bacteria and heterotrophic eukaryotes. [2Fe-2S] cluster is required as a cofactor. Requires [3Fe-4S] cluster as cofactor. The cofactor is [4Fe-4S] cluster.

It localises to the mitochondrion inner membrane. It carries out the reaction a quinone + succinate = fumarate + a quinol. It participates in carbohydrate metabolism; tricarboxylic acid cycle; fumarate from succinate (eukaryal route): step 1/1. Functionally, iron-sulfur protein (IP) subunit of succinate dehydrogenase (SDH) that is involved in complex II of the mitochondrial electron transport chain and is responsible for transferring electrons from succinate to ubiquinone (coenzyme Q). This Oryza sativa subsp. japonica (Rice) protein is Succinate dehydrogenase [ubiquinone] iron-sulfur subunit 1, mitochondrial.